Consider the following 104-residue polypeptide: Large ribosomal subunit protein uL24 (104 aa).

Belongs to the universal ribosomal protein uL24 family. As to quaternary structure, part of the 50S ribosomal subunit.

One of two assembly initiator proteins, it binds directly to the 5'-end of the 23S rRNA, where it nucleates assembly of the 50S subunit. In terms of biological role, one of the proteins that surrounds the polypeptide exit tunnel on the outside of the subunit. This chain is Large ribosomal subunit protein uL24, found in Corynebacterium aurimucosum (strain ATCC 700975 / DSM 44827 / CIP 107346 / CN-1) (Corynebacterium nigricans).